The sequence spans 147 residues: Hemoglobin subunit gamma-2 (147 aa).

The region spanning 3-147 (HFTEEDKATI…VASALSSRYH (145 aa)) is the Globin domain. Thr-13 carries the phosphothreonine modification. Phosphoserine is present on residues Ser-45, Ser-51, and Ser-53. Lys-60 carries the N6-acetyllysine modification. A heme b-binding site is contributed by His-64. Lys-83 carries the N6-acetyllysine modification. His-93 provides a ligand contact to heme b. An S-nitrosocysteine modification is found at Cys-94. Residues Ser-140, Ser-143, and Ser-144 each carry the phosphoserine modification.

This sequence belongs to the globin family. As to quaternary structure, heterotetramer of two alpha chains and two gamma chains in fetal hemoglobin (Hb F). Red blood cells.

Its function is as follows. Gamma chains make up the fetal hemoglobin F, in combination with alpha chains. This Pongo pygmaeus (Bornean orangutan) protein is Hemoglobin subunit gamma-2 (HBG2).